We begin with the raw amino-acid sequence, 56 residues long: MFGWAVTFLIVALVAALLGFTGIAGIATEIAWILFVVGIILFVVFLVLGRRGRPPL.

A run of 2 helical transmembrane segments spans residues Val6 to Ile26 and Glu29 to Gly49.

The protein belongs to the UPF0391 family.

Its subcellular location is the cell membrane. The sequence is that of UPF0391 membrane protein Noc_0484 from Nitrosococcus oceani (strain ATCC 19707 / BCRC 17464 / JCM 30415 / NCIMB 11848 / C-107).